The chain runs to 277 residues: Putative pyruvate, phosphate dikinase regulatory protein (277 aa).

151-158 is a binding site for ADP; that stretch reads GISRTSKT.

It belongs to the pyruvate, phosphate/water dikinase regulatory protein family. PDRP subfamily.

It catalyses the reaction N(tele)-phospho-L-histidyl/L-threonyl-[pyruvate, phosphate dikinase] + ADP = N(tele)-phospho-L-histidyl/O-phospho-L-threonyl-[pyruvate, phosphate dikinase] + AMP + H(+). The enzyme catalyses N(tele)-phospho-L-histidyl/O-phospho-L-threonyl-[pyruvate, phosphate dikinase] + phosphate + H(+) = N(tele)-phospho-L-histidyl/L-threonyl-[pyruvate, phosphate dikinase] + diphosphate. Functionally, bifunctional serine/threonine kinase and phosphorylase involved in the regulation of the pyruvate, phosphate dikinase (PPDK) by catalyzing its phosphorylation/dephosphorylation. This chain is Putative pyruvate, phosphate dikinase regulatory protein, found in Alkaliphilus oremlandii (strain OhILAs) (Clostridium oremlandii (strain OhILAs)).